Reading from the N-terminus, the 471-residue chain is ATP synthase subunit beta (471 aa).

152-159 (GGAGVGKT) contacts ATP.

This sequence belongs to the ATPase alpha/beta chains family. As to quaternary structure, F-type ATPases have 2 components, CF(1) - the catalytic core - and CF(0) - the membrane proton channel. CF(1) has five subunits: alpha(3), beta(3), gamma(1), delta(1), epsilon(1). CF(0) has three main subunits: a(1), b(2) and c(9-12). The alpha and beta chains form an alternating ring which encloses part of the gamma chain. CF(1) is attached to CF(0) by a central stalk formed by the gamma and epsilon chains, while a peripheral stalk is formed by the delta and b chains.

It is found in the cell membrane. The catalysed reaction is ATP + H2O + 4 H(+)(in) = ADP + phosphate + 5 H(+)(out). Produces ATP from ADP in the presence of a proton gradient across the membrane. The catalytic sites are hosted primarily by the beta subunits. The chain is ATP synthase subunit beta from Herpetosiphon aurantiacus (Herpetosiphon giganteus).